Reading from the N-terminus, the 576-residue chain is Arginine--tRNA ligase (576 aa).

The 'HIGH' region signature appears at 122–132 (PNVAKEMHVGH).

Belongs to the class-I aminoacyl-tRNA synthetase family. As to quaternary structure, monomer.

It localises to the cytoplasm. It carries out the reaction tRNA(Arg) + L-arginine + ATP = L-arginyl-tRNA(Arg) + AMP + diphosphate. This chain is Arginine--tRNA ligase, found in Pectobacterium atrosepticum (strain SCRI 1043 / ATCC BAA-672) (Erwinia carotovora subsp. atroseptica).